Here is a 463-residue protein sequence, read N- to C-terminus: Quinolone resistance protein NorB (463 aa).

A run of 14 helical transmembrane segments spans residues 17 to 37 (IGIV…VNVV), 53 to 73 (IAVS…GGLA), 86 to 106 (IILN…LLLI), 107 to 127 (IGRL…LSII), 142 to 162 (YWSI…GAVA), 165 to 185 (LGWR…LFLI), 201 to 221 (FDIK…ILIT), 230 to 250 (SLLF…FIVL), 273 to 293 (TASN…NTFV), 299 to 319 (YSSL…LIMI), 334 to 354 (PMLI…LTFL), 357 to 377 (IFYV…LGIY), 403 to 423 (MASA…YAIV), and 435 to 455 (IALW…LLLV).

The protein belongs to the major facilitator superfamily. TCR/Tet family.

It localises to the cell membrane. Multidrug efflux pump that acts independently of NorA and is one of the factors that confers resistance against diverse quinolones and chemical compounds. This Staphylococcus aureus (strain USA300) protein is Quinolone resistance protein NorB (norB).